A 157-amino-acid chain; its full sequence is Peptide methionine sulfoxide reductase MsrA (157 aa).

The active site involves C10.

Belongs to the MsrA Met sulfoxide reductase family.

The enzyme catalyses L-methionyl-[protein] + [thioredoxin]-disulfide + H2O = L-methionyl-(S)-S-oxide-[protein] + [thioredoxin]-dithiol. The catalysed reaction is [thioredoxin]-disulfide + L-methionine + H2O = L-methionine (S)-S-oxide + [thioredoxin]-dithiol. Its function is as follows. Has an important function as a repair enzyme for proteins that have been inactivated by oxidation. Catalyzes the reversible oxidation-reduction of methionine sulfoxide in proteins to methionine. The polypeptide is Peptide methionine sulfoxide reductase MsrA (Clostridium botulinum (strain Hall / ATCC 3502 / NCTC 13319 / Type A)).